We begin with the raw amino-acid sequence, 142 residues long: Large ribosomal subunit protein uL23 (142 aa).

It belongs to the universal ribosomal protein uL23 family.

In terms of biological role, this protein binds to a specific region on the 26S rRNA. This Cyberlindnera jadinii (Torula yeast) protein is Large ribosomal subunit protein uL23 (RPL25).